Consider the following 273-residue polypeptide: tRNA (guanine-N(7)-)-methyltransferase (273 aa).

Residues Gly86, Glu109, Arg111, Asn142, Ala143, and Leu162 each contribute to the S-adenosyl-L-methionine site. Asp165 is a catalytic residue. The alphaC helix stretch occupies residues 166 to 174; sequence PHFKKTKHK. The S-adenosyl-L-methionine site is built by Thr240 and Glu242. Positions 240–248 are alpha6 helix; the sequence is TEEGKKVQR.

This sequence belongs to the class I-like SAM-binding methyltransferase superfamily. TrmB family. Catalytic component of the METTL1-WDR4 complex, composed of mettl1 and wdr4.

The protein localises to the nucleus. The catalysed reaction is guanosine(46) in tRNA + S-adenosyl-L-methionine = N(7)-methylguanosine(46) in tRNA + S-adenosyl-L-homocysteine. It carries out the reaction a guanosine in mRNA + S-adenosyl-L-methionine = an N(7)-methylguanosine in mRNA + S-adenosyl-L-homocysteine. The enzyme catalyses a guanosine in miRNA + S-adenosyl-L-methionine = an N(7)-methylguanosine in miRNA + S-adenosyl-L-homocysteine. Its pathway is tRNA modification; N(7)-methylguanine-tRNA biosynthesis. Catalytic component of METTL1-WDR4 methyltransferase complex that mediates the formation of N(7)-methylguanine in a subset of RNA species, such as tRNAs, mRNAs and microRNAs (miRNAs). Catalyzes the formation of N(7)-methylguanine at position 46 (m7G46) in a large subset of tRNAs that contain the 5'-RAGGU-3' motif within the variable loop. M7G46 interacts with C13-G22 in the D-loop to stabilize tRNA tertiary structure and protect tRNAs from decay. Also acts as a methyltransferase for a subset of internal N(7)-methylguanine in mRNAs. Internal N(7)-methylguanine methylation of mRNAs in response to stress promotes their relocalization to stress granules, thereby suppressing their translation. Also methylates a specific subset of miRNAs. This chain is tRNA (guanine-N(7)-)-methyltransferase (mettl1), found in Xenopus laevis (African clawed frog).